A 252-amino-acid polypeptide reads, in one-letter code: Tumor necrosis factor ligand superfamily member 15 (252 aa).

Topologically, residues 1–39 are cytoplasmic; it reads MAEELGLGFGEGVPVEVLPEGCRHRPEARAGLAARSKAC. Residues 40 to 60 traverse the membrane as a helical; Signal-anchor for type II membrane protein segment; the sequence is LALTCCLLSFPILAGLSTLLM. At 61–252 the chain is on the extracellular side; that stretch reads AGQLRVPGKD…DKTFFGAFLL (192 aa). In terms of domain architecture, THD spans 96-252; the sequence is PRAHLTIKKQ…DKTFFGAFLL (157 aa). Asn137 carries N-linked (GlcNAc...) asparagine glycosylation. Cysteines 163 and 203 form a disulfide. Asn230 carries an N-linked (GlcNAc...) asparagine glycan.

The protein belongs to the tumor necrosis factor family. As to quaternary structure, homotrimer.

The protein resides in the membrane. Its function is as follows. Receptor for TNFRSF25 and TNFRSF6B. Mediates activation of NF-kappa-B. Inhibits vascular endothelial growth and angiogenesis (in vitro). Promotes activation of caspases and apoptosis. Promotes splenocyte alloactivation. The chain is Tumor necrosis factor ligand superfamily member 15 (Tnfsf15) from Mus musculus (Mouse).